The chain runs to 139 residues: FAD synthase (139 aa).

Residues 9-10 (TF), 14-17 (HPGH), and Asp-92 each bind ATP.

This sequence belongs to the archaeal FAD synthase family. As to quaternary structure, homodimer. Requires a divalent metal cation as cofactor.

It catalyses the reaction FMN + ATP + H(+) = FAD + diphosphate. It functions in the pathway cofactor biosynthesis; FAD biosynthesis; FAD from FMN: step 1/1. Catalyzes the transfer of the AMP portion of ATP to flavin mononucleotide (FMN) to produce flavin adenine dinucleotide (FAD) coenzyme. The sequence is that of FAD synthase from Methanosarcina barkeri (strain Fusaro / DSM 804).